The following is a 342-amino-acid chain: Phenylalanine--tRNA ligase alpha subunit (342 aa).

A Mg(2+)-binding site is contributed by Glu257.

It belongs to the class-II aminoacyl-tRNA synthetase family. Phe-tRNA synthetase alpha subunit type 1 subfamily. In terms of assembly, tetramer of two alpha and two beta subunits. Mg(2+) is required as a cofactor.

The protein localises to the cytoplasm. It catalyses the reaction tRNA(Phe) + L-phenylalanine + ATP = L-phenylalanyl-tRNA(Phe) + AMP + diphosphate + H(+). This chain is Phenylalanine--tRNA ligase alpha subunit, found in Legionella pneumophila subsp. pneumophila (strain Philadelphia 1 / ATCC 33152 / DSM 7513).